The primary structure comprises 184 residues: NADH-quinone oxidoreductase subunit B (184 aa).

[4Fe-4S] cluster is bound by residues Cys37, Cys38, Cys103, and Cys132.

Belongs to the complex I 20 kDa subunit family. NDH-1 is composed of 14 different subunits. Subunits NuoB, C, D, E, F, and G constitute the peripheral sector of the complex. [4Fe-4S] cluster serves as cofactor.

Its subcellular location is the cell membrane. The enzyme catalyses a quinone + NADH + 5 H(+)(in) = a quinol + NAD(+) + 4 H(+)(out). Functionally, NDH-1 shuttles electrons from NADH, via FMN and iron-sulfur (Fe-S) centers, to quinones in the respiratory chain. The immediate electron acceptor for the enzyme in this species is believed to be a menaquinone. Couples the redox reaction to proton translocation (for every two electrons transferred, four hydrogen ions are translocated across the cytoplasmic membrane), and thus conserves the redox energy in a proton gradient. This chain is NADH-quinone oxidoreductase subunit B, found in Beutenbergia cavernae (strain ATCC BAA-8 / DSM 12333 / CCUG 43141 / JCM 11478 / NBRC 16432 / NCIMB 13614 / HKI 0122).